Consider the following 263-residue polypeptide: Large ribosomal subunit protein uL23m (263 aa).

The transit peptide at 1 to 45 (MPRLTVGTKNMLYPLQKTLAVGSCKPEQVPIRSLASVVESSSKIL) directs the protein to the mitochondrion.

Belongs to the universal ribosomal protein uL23 family. As to quaternary structure, component of the mitochondrial large ribosomal subunit (mt-LSU). Mature yeast 74S mitochondrial ribosomes consist of a small (37S) and a large (54S) subunit. The 37S small subunit contains a 15S ribosomal RNA (15S mt-rRNA) and 34 different proteins. The 54S large subunit contains a 21S rRNA (21S mt-rRNA) and 46 different proteins. uL23m forms the wall of the exit tunnel. Interacts with the C-terminus of OXA1.

The protein resides in the mitochondrion. Its function is as follows. Component of the mitochondrial ribosome (mitoribosome), a dedicated translation machinery responsible for the synthesis of mitochondrial genome-encoded proteins, including at least some of the essential transmembrane subunits of the mitochondrial respiratory chain. The mitoribosomes are attached to the mitochondrial inner membrane and translation products are cotranslationally integrated into the membrane. The sequence is that of Large ribosomal subunit protein uL23m (MRP20) from Saccharomyces cerevisiae (strain ATCC 204508 / S288c) (Baker's yeast).